Reading from the N-terminus, the 369-residue chain is Anhydro-N-acetylmuramic acid kinase (369 aa).

Position 12–19 (12–19) interacts with ATP; sequence GTSMDGVD.

This sequence belongs to the anhydro-N-acetylmuramic acid kinase family.

The enzyme catalyses 1,6-anhydro-N-acetyl-beta-muramate + ATP + H2O = N-acetyl-D-muramate 6-phosphate + ADP + H(+). Its pathway is amino-sugar metabolism; 1,6-anhydro-N-acetylmuramate degradation. It functions in the pathway cell wall biogenesis; peptidoglycan recycling. Its function is as follows. Catalyzes the specific phosphorylation of 1,6-anhydro-N-acetylmuramic acid (anhMurNAc) with the simultaneous cleavage of the 1,6-anhydro ring, generating MurNAc-6-P. Is required for the utilization of anhMurNAc either imported from the medium or derived from its own cell wall murein, and thus plays a role in cell wall recycling. This chain is Anhydro-N-acetylmuramic acid kinase, found in Shewanella pealeana (strain ATCC 700345 / ANG-SQ1).